The following is a 320-amino-acid chain: ATP-dependent 6-phosphofructokinase (320 aa).

An ATP-binding site is contributed by G12. 22 to 26 (RGVVR) provides a ligand contact to ADP. ATP contacts are provided by residues 73-74 (RF) and 103-106 (GDGS). D104 contacts Mg(2+). 126–128 (TID) is a substrate binding site. D128 acts as the Proton acceptor in catalysis. R155 provides a ligand contact to ADP. Substrate is bound by residues R163 and 170–172 (MGR). Residues 186 to 188 (GCE), K212, and 214 to 216 (KKH) contribute to the ADP site. Residues E223, R244, and 250–253 (HIQR) each bind substrate.

The protein belongs to the phosphofructokinase type A (PFKA) family. ATP-dependent PFK group I subfamily. Prokaryotic clade 'B1' sub-subfamily. Homotetramer. Mg(2+) serves as cofactor.

Its subcellular location is the cytoplasm. It catalyses the reaction beta-D-fructose 6-phosphate + ATP = beta-D-fructose 1,6-bisphosphate + ADP + H(+). It participates in carbohydrate degradation; glycolysis; D-glyceraldehyde 3-phosphate and glycerone phosphate from D-glucose: step 3/4. Allosterically activated by ADP and other diphosphonucleosides, and allosterically inhibited by phosphoenolpyruvate. Catalyzes the phosphorylation of D-fructose 6-phosphate to fructose 1,6-bisphosphate by ATP, the first committing step of glycolysis. This chain is ATP-dependent 6-phosphofructokinase, found in Photobacterium profundum (strain SS9).